A 232-amino-acid polypeptide reads, in one-letter code: Jasmonate ZIM domain-containing protein 1 (232 aa).

Residues 1 to 24 (MSSFPNTVAEGRRSGKAPEKSTFS) form a disordered region. The span at 10 to 19 (EGRRSGKAPE) shows a compositional bias: basic and acidic residues. The Tify domain maps to 96-131 (PGPESPQLTIFYAGKMLVFDAFPPEKATEVMEMATK). Polar residues-rich tracts occupy residues 133-142 (ASNNSGTEES) and 158-167 (MPQTNTSSET). Positions 133–232 (ASNNSGTEES…QCSKQFDLNF (100 aa)) are disordered. Residues 182–189 (PRRASLLK) carry the Nuclear localization signal motif. The Jas motif lies at 183–205 (RRASLLKFLEKRKERVNARGPYQ). A compositionally biased stretch (basic and acidic residues) spans 190 to 199 (FLEKRKERVN).

Belongs to the TIFY/JAZ family. (Microbial infection) Interacts with the pathogenic Pseudomonas syringae HopZ1a protein; this interaction leads to its degradation. In terms of processing, ubiquitinated. Targeted for degradation by the SCF(COI1) E3 ubiquitin ligase-proteasome pathway during jasmonate signaling. (Microbial infection) Acetylated by Pseudomonas syringae HopZ1a. As to expression, mostly expressed in leaves and flowers and, to a lower extent, in grean pods and roots.

It is found in the nucleus. The protein localises to the cell membrane. Repressor of jasmonate responses. In Glycine max (Soybean), this protein is Jasmonate ZIM domain-containing protein 1.